A 545-amino-acid polypeptide reads, in one-letter code: Chaperonin GroEL 3 (545 aa).

ATP is bound by residues 30–33 (TLGP), K51, 87–91 (DGTTT), G415, and D496.

This sequence belongs to the chaperonin (HSP60) family. In terms of assembly, forms a cylinder of 14 subunits composed of two heptameric rings stacked back-to-back. Interacts with the co-chaperonin GroES.

It is found in the cytoplasm. The catalysed reaction is ATP + H2O + a folded polypeptide = ADP + phosphate + an unfolded polypeptide.. Functionally, together with its co-chaperonin GroES, plays an essential role in assisting protein folding. The GroEL-GroES system forms a nano-cage that allows encapsulation of the non-native substrate proteins and provides a physical environment optimized to promote and accelerate protein folding. This is Chaperonin GroEL 3 from Nitrobacter hamburgensis (strain DSM 10229 / NCIMB 13809 / X14).